The sequence spans 225 residues: Uracil-DNA glycosylase 1 (225 aa).

Residue Asp-68 is the Proton acceptor of the active site.

Belongs to the uracil-DNA glycosylase (UDG) superfamily. UNG family.

Its subcellular location is the cytoplasm. The catalysed reaction is Hydrolyzes single-stranded DNA or mismatched double-stranded DNA and polynucleotides, releasing free uracil.. Excises uracil residues from the DNA which can arise as a result of misincorporation of dUMP residues by DNA polymerase or due to deamination of cytosine. In Streptomyces avermitilis (strain ATCC 31267 / DSM 46492 / JCM 5070 / NBRC 14893 / NCIMB 12804 / NRRL 8165 / MA-4680), this protein is Uracil-DNA glycosylase 1 (ung1).